A 156-amino-acid polypeptide reads, in one-letter code: Tripartite terminase subunit 2 (156 aa).

The interval 1-37 (MYESENASEHHPELEDVFSENTGDSNPSMGSSDSTRS) is disordered. The segment covering 19–37 (SENTGDSNPSMGSSDSTRS) has biased composition (polar residues).

Belongs to the herpesviridae TRM2 protein family. In terms of assembly, associates with TRM1 and TRM3 to form the tripartite terminase complex.

The protein localises to the host nucleus. Component of the molecular motor that translocates viral genomic DNA in empty capsid during DNA packaging. Forms a tripartite terminase complex together with TRM1 and TRM3 in the host cytoplasm. Once the complex reaches the host nucleus, it interacts with the capsid portal vertex. This portal forms a ring in which genomic DNA is translocated into the capsid. The sequence is that of Tripartite terminase subunit 2 from Varicella-zoster virus (strain Dumas) (HHV-3).